We begin with the raw amino-acid sequence, 979 residues long: METGSPGKRPVLPKRARLLVTAGMGMLALLLFGPRLVDIYVDWLWFGEVGFRSVWITVLLTRLAIVAAVALVVAGIVLAALLLAYRSRPFFVPDEPQRDPVAPLRSAVMRRPRLFGWGIAVTLGVVCGLIASFDWVKVQLFVHGGTFGIVDPEFGYDIGFFVFDLPFYRSVLNWLFVAVVLAFLASLLTHYLFGGLRLTTGRGMLTQAARVQLAVFAGAVVLLKAVAYWLDRYELLSSGRKEPTFTGAGYTDIHAELPAKLVLVAIAVLCAVSFFTAIFLRDLRIPAMAAALLVLSAILVGGLWPLLMEQFSVRPNAADVERPYIQRNIEATREAYRIGGDWVQYRSYPGIGTKQPRDVPVDVTTIAKVRLLDPHILSRTFTQQQQLKNFFSFAEILDIDRYRIDGELQDYIVGVRELSPKSLTGNQTDWINKHIVYTHGNGFVAAPANRVNAAARDAENISDSNSGYPIYAVSDIASLGSGRQVIPVEQPRVYYGEVIAQADPDYAIVGGAPGSAPREYDTDTSKYTYTGAGGVSIGNWFNRTVFATKFAQHKFLFSREIGSESKVLIHRDPKERVQRVAPWLTTDDNPYPVVVNGRIVWIVDAYTTLDTYPYAQRSSLEGPVTSPTGIVRQGKQVSYVRNSVKATVDAYDGTVTLFQFDRDDPVLRTWMRAFPGTVKSEDQIPDELRAHFRYPEDLFEVQRSLLAKYHVDEPREFFTTNAFWSVPSDPTNDANATQPPFYVLVGDQQSAQPSFRLASAMVGYNREFLSAYISAHSDPANYGKLTVLELPTDTLTQGPQQIQNSMISDTRVASERTLLERSNRIHYGNLLSLPIADGGVLYVEPLYTERISTSPSSSTFPQLSRVLVSVREPRTEGGVRVGYAPTLAESLDQVFGPGTGRVATAPGGDAASAPPPGAGGPAPPQAVPPPRTTQPPAAPPRGPDVPPATVAELRETLADLRAVLDRLEKAIDAAETPGG.

7 consecutive transmembrane segments (helical) span residues 19 to 41 (LVTA…DIYV), 63 to 85 (LAIV…LLAY), 114 to 136 (LFGW…FDWV), 174 to 196 (WLFV…FGGL), 208 to 230 (AARV…AYWL), 261 to 280 (LVLV…AIFL), and 285 to 307 (IPAM…WPLL). Positions 898–948 (GTGRVATAPGGDAASAPPPGAGGPAPPQAVPPPRTTQPPAAPPRGPDVPPA) are disordered. Residues 902–912 (VATAPGGDAAS) show a composition bias toward low complexity. The segment covering 913 to 946 (APPPGAGGPAPPQAVPPPRTTQPPAAPPRGPDVP) has biased composition (pro residues).

Belongs to the UPF0182 family.

The protein resides in the cell membrane. The protein is UPF0182 protein Mb0065 of Mycobacterium bovis (strain ATCC BAA-935 / AF2122/97).